Reading from the N-terminus, the 78-residue chain is RVINDDCPNLIGNRDLYKKVEWICEDCSNIFRNTGMATLCRKNCFFNEDFLWCVYATERTEEMSQLRQWVGILGAGRE.

Disulfide bonds link cysteine 7/cysteine 44, cysteine 24/cysteine 40, and cysteine 27/cysteine 53.

The protein resides in the secreted. In terms of biological role, inhibits Y-organs where molting hormone (ecdysteroid) is secreted. A molting cycle is initiated when MIH secretion diminishes or stops. Also has significant hyperglycemic hormone (CHH) activity. The chain is Molt-inhibiting hormone from Cancer pagurus (Rock crab).